The chain runs to 182 residues: Ribosome-recycling factor (182 aa).

Belongs to the RRF family.

It is found in the cytoplasm. Responsible for the release of ribosomes from messenger RNA at the termination of protein biosynthesis. May increase the efficiency of translation by recycling ribosomes from one round of translation to another. In Synechococcus sp. (strain JA-2-3B'a(2-13)) (Cyanobacteria bacterium Yellowstone B-Prime), this protein is Ribosome-recycling factor.